The sequence spans 324 residues: Biotin synthase (324 aa).

Residues 37 to 264 form the Radical SAM core domain; it reads NEVQVAALMN…ASYVRLAAGR (228 aa). Residues cysteine 52, cysteine 56, and cysteine 59 each contribute to the [4Fe-4S] cluster site. 4 residues coordinate [2Fe-2S] cluster: cysteine 96, cysteine 127, cysteine 187, and arginine 259.

The protein belongs to the radical SAM superfamily. Biotin synthase family. In terms of assembly, homodimer. It depends on [4Fe-4S] cluster as a cofactor. The cofactor is [2Fe-2S] cluster.

It catalyses the reaction (4R,5S)-dethiobiotin + (sulfur carrier)-SH + 2 reduced [2Fe-2S]-[ferredoxin] + 2 S-adenosyl-L-methionine = (sulfur carrier)-H + biotin + 2 5'-deoxyadenosine + 2 L-methionine + 2 oxidized [2Fe-2S]-[ferredoxin]. It functions in the pathway cofactor biosynthesis; biotin biosynthesis; biotin from 7,8-diaminononanoate: step 2/2. Catalyzes the conversion of dethiobiotin (DTB) to biotin by the insertion of a sulfur atom into dethiobiotin via a radical-based mechanism. The chain is Biotin synthase from Anaplasma marginale (strain Florida).